The primary structure comprises 335 residues: GTPase Obg (335 aa).

In terms of domain architecture, Obg spans 1–158 (MFVDQITLEL…RLVELELKLI (158 aa)). The 176-residue stretch at 159–334 (ADIGLVGFPN…LYDLFKSKLS (176 aa)) folds into the OBG-type G domain. Residues 165–172 (GFPNAGKS), 190–194 (FTTLH), 215–218 (DIPG), 285–288 (NKID), and 315–317 (SGL) each bind GTP. The Mg(2+) site is built by serine 172 and threonine 192.

Belongs to the TRAFAC class OBG-HflX-like GTPase superfamily. OBG GTPase family. In terms of assembly, monomer. Requires Mg(2+) as cofactor.

It is found in the cytoplasm. Its function is as follows. An essential GTPase which binds GTP, GDP and possibly (p)ppGpp with moderate affinity, with high nucleotide exchange rates and a fairly low GTP hydrolysis rate. Plays a role in control of the cell cycle, stress response, ribosome biogenesis and in those bacteria that undergo differentiation, in morphogenesis control. This chain is GTPase Obg, found in Chlamydia trachomatis serovar L2 (strain ATCC VR-902B / DSM 19102 / 434/Bu).